Consider the following 122-residue polypeptide: Anti-sigma-F factor antagonist RsfB (122 aa).

Positions 7–115 (ITVTVADHNG…STLHDALTGV (109 aa)) constitute an STAS domain. S61 is modified (phosphoserine).

Belongs to the anti-sigma-factor antagonist family. As to quaternary structure, interacts with anti-sigma-F factor RsbW (UsfX). Its phosphorylation may prevent this interaction. Putative phosphorylation on Ser-61 may prevent interaction with RsbW.

Its function is as follows. Positive regulator of sigma-F (SigF) activity. Binds to anti-sigma-F factor RsbW (UsfX) preventing its binding to SigF, thus activating transcription. In Mycobacterium tuberculosis (strain CDC 1551 / Oshkosh), this protein is Anti-sigma-F factor antagonist RsfB (rsfB).